Consider the following 1513-residue polypeptide: DNA-directed RNA polymerase subunit beta'' (1513 aa).

4 residues coordinate Zn(2+): Cys220, Cys296, Cys303, and Cys306. Residues 644-769 are disordered; that stretch reads RTREKDSENE…EYGNPEEDSV (126 aa). A compositionally biased stretch (basic and acidic residues) spans 659–679; sequence NEYRTREEECKTLEDEYRTRE. The segment covering 680–707 has biased composition (acidic residues); it reads EEYETLEDEYGIPENEYETLEDEYGILE. The segment covering 726 to 737 has biased composition (basic and acidic residues); it reads NKYRPREDKYGT. Positions 738–767 are enriched in acidic residues; the sequence is LEEDSEDEHGTLEEDSEEDSEDEYGNPEED.

Belongs to the RNA polymerase beta' chain family. RpoC2 subfamily. As to quaternary structure, in plastids the minimal PEP RNA polymerase catalytic core is composed of four subunits: alpha, beta, beta', and beta''. When a (nuclear-encoded) sigma factor is associated with the core the holoenzyme is formed, which can initiate transcription. Zn(2+) is required as a cofactor.

The protein resides in the plastid. It is found in the chloroplast. It carries out the reaction RNA(n) + a ribonucleoside 5'-triphosphate = RNA(n+1) + diphosphate. Its function is as follows. DNA-dependent RNA polymerase catalyzes the transcription of DNA into RNA using the four ribonucleoside triphosphates as substrates. The sequence is that of DNA-directed RNA polymerase subunit beta'' from Oryza nivara (Indian wild rice).